A 394-amino-acid chain; its full sequence is Elongation factor Tu (394 aa).

A tr-type G domain is found at 10-205; the sequence is KPHMNVGTIG…TMDNYFDLPQ (196 aa). A G1 region spans residues 19–26; the sequence is GHVDHGKT. A GTP-binding site is contributed by 19-26; the sequence is GHVDHGKT. Thr-26 is a binding site for Mg(2+). The tract at residues 61-65 is G2; it reads GITIN. Positions 82-85 are G3; that stretch reads DCPG. Residues 82 to 86 and 137 to 140 each bind GTP; these read DCPGH and NKLD. A G4 region spans residues 137–140; that stretch reads NKLD. The segment at 173 to 175 is G5; that stretch reads SAF.

This sequence belongs to the TRAFAC class translation factor GTPase superfamily. Classic translation factor GTPase family. EF-Tu/EF-1A subfamily. In terms of assembly, monomer.

Its subcellular location is the cytoplasm. It catalyses the reaction GTP + H2O = GDP + phosphate + H(+). Its function is as follows. GTP hydrolase that promotes the GTP-dependent binding of aminoacyl-tRNA to the A-site of ribosomes during protein biosynthesis. The protein is Elongation factor Tu of Borrelia turicatae (strain 91E135).